A 325-amino-acid chain; its full sequence is tRNA U34 carboxymethyltransferase (325 aa).

Residues lysine 91, tryptophan 105, lysine 110, glycine 130, 152–154 (DPS), 181–182 (ME), methionine 197, tyrosine 201, and arginine 316 each bind carboxy-S-adenosyl-L-methionine.

This sequence belongs to the class I-like SAM-binding methyltransferase superfamily. CmoB family. Homotetramer.

It carries out the reaction carboxy-S-adenosyl-L-methionine + 5-hydroxyuridine(34) in tRNA = 5-carboxymethoxyuridine(34) in tRNA + S-adenosyl-L-homocysteine + H(+). Catalyzes carboxymethyl transfer from carboxy-S-adenosyl-L-methionine (Cx-SAM) to 5-hydroxyuridine (ho5U) to form 5-carboxymethoxyuridine (cmo5U) at position 34 in tRNAs. The sequence is that of tRNA U34 carboxymethyltransferase from Saccharophagus degradans (strain 2-40 / ATCC 43961 / DSM 17024).